The sequence spans 81 residues: Putative defensin-like protein 265 (81 aa).

An N-terminal signal peptide occupies residues 1–26; sequence MEKTVSRKVVVLAILLSLSCLCIAKA. 3 cysteine pairs are disulfide-bonded: Cys48–Cys66, Cys54–Cys71, and Cys58–Cys73.

This sequence belongs to the DEFL family.

It localises to the secreted. The protein is Putative defensin-like protein 265 of Arabidopsis thaliana (Mouse-ear cress).